A 352-amino-acid polypeptide reads, in one-letter code: Adenosine deaminase (352 aa).

N-acetylalanine is present on alanine 2. Zn(2+) contacts are provided by histidine 15 and histidine 17. Histidine 17 and aspartate 19 together coordinate substrate. At lysine 54 the chain carries N6-acetyllysine. Glycine 184 provides a ligand contact to substrate. Histidine 214 contacts Zn(2+). Glutamate 217 serves as the catalytic Proton donor. Position 232 is an N6-acetyllysine (lysine 232). Aspartate 295 is a binding site for Zn(2+). Substrate is bound at residue aspartate 296.

It belongs to the metallo-dependent hydrolases superfamily. Adenosine and AMP deaminases family. Interacts with DPP4 (via extracellular domain). Interacts with PLG (via Kringle 4 domain); the interaction stimulates PLG activation when in complex with DPP4. Zn(2+) is required as a cofactor. As to expression, detected in brain neurons in the median emninence (at protein level). Expressed in secondary deciduum (at protein level). Found in all tissues, occurs in large amounts in T-lymphocytes and, at the time of weaning, in gastrointestinal tissues.

It localises to the cell membrane. The protein resides in the cell junction. The protein localises to the cytoplasmic vesicle lumen. Its subcellular location is the cytoplasm. It is found in the lysosome. It catalyses the reaction adenosine + H2O + H(+) = inosine + NH4(+). The catalysed reaction is 2'-deoxyadenosine + H2O + H(+) = 2'-deoxyinosine + NH4(+). The enzyme catalyses cordycepin + H2O + H(+) = 3'-deoxyinosine + NH4(+). Catalyzes the hydrolytic deamination of adenosine and 2-deoxyadenosine. Plays an important role in purine metabolism and in adenosine homeostasis. Modulates signaling by extracellular adenosine, and so contributes indirectly to cellular signaling events. Acts as a positive regulator of T-cell coactivation, by binding DPP4. Its interaction with DPP4 regulates lymphocyte-epithelial cell adhesion. Enhances dendritic cell immunogenicity by affecting dendritic cell costimulatory molecule expression and cytokines and chemokines secretion. Enhances CD4+ T-cell differentiation and proliferation. Acts as a positive modulator of adenosine receptors ADORA1 and ADORA2A, by enhancing their ligand affinity via conformational change. Stimulates plasminogen activation. Plays a role in male fertility. Plays a protective role in early postimplantation embryonic development. Also responsible for the deamination of cordycepin (3'-deoxyadenosine), a fungal natural product that shows antitumor, antibacterial, antifungal, antivirus, and immune regulation properties. The polypeptide is Adenosine deaminase (Ada) (Mus musculus (Mouse)).